A 354-amino-acid chain; its full sequence is tRNA-specific 2-thiouridylase MnmA (354 aa).

ATP contacts are provided by residues 6-13 (LLSGGVDS) and Leu-33. The Nucleophile role is filled by Cys-100. A disulfide bridge connects residues Cys-100 and Cys-195. Gly-123 lines the ATP pocket. The interval 145 to 147 (KDQ) is interaction with tRNA. Cys-195 serves as the catalytic Cysteine persulfide intermediate.

The protein belongs to the MnmA/TRMU family.

It localises to the cytoplasm. The catalysed reaction is S-sulfanyl-L-cysteinyl-[protein] + uridine(34) in tRNA + AH2 + ATP = 2-thiouridine(34) in tRNA + L-cysteinyl-[protein] + A + AMP + diphosphate + H(+). Catalyzes the 2-thiolation of uridine at the wobble position (U34) of tRNA, leading to the formation of s(2)U34. The sequence is that of tRNA-specific 2-thiouridylase MnmA from Borrelia recurrentis (strain A1).